A 247-amino-acid polypeptide reads, in one-letter code: UDP-2,3-diacylglucosamine hydrolase (247 aa).

The Mn(2+) site is built by Asp-8, His-10, Asp-41, Asn-79, and His-114. 79 to 80 contacts substrate; sequence NR. Residues Asp-122, Ser-160, Asp-171, Asn-174, and His-202 each contribute to the substrate site. The Mn(2+) site is built by His-202 and His-204.

It belongs to the LpxH family. The cofactor is Mn(2+).

The protein localises to the cell inner membrane. It catalyses the reaction UDP-2-N,3-O-bis[(3R)-3-hydroxytetradecanoyl]-alpha-D-glucosamine + H2O = 2-N,3-O-bis[(3R)-3-hydroxytetradecanoyl]-alpha-D-glucosaminyl 1-phosphate + UMP + 2 H(+). The protein operates within glycolipid biosynthesis; lipid IV(A) biosynthesis; lipid IV(A) from (3R)-3-hydroxytetradecanoyl-[acyl-carrier-protein] and UDP-N-acetyl-alpha-D-glucosamine: step 4/6. Its function is as follows. Hydrolyzes the pyrophosphate bond of UDP-2,3-diacylglucosamine to yield 2,3-diacylglucosamine 1-phosphate (lipid X) and UMP by catalyzing the attack of water at the alpha-P atom. Involved in the biosynthesis of lipid A, a phosphorylated glycolipid that anchors the lipopolysaccharide to the outer membrane of the cell. This Xanthomonas oryzae pv. oryzae (strain MAFF 311018) protein is UDP-2,3-diacylglucosamine hydrolase.